The chain runs to 218 residues: Cytochrome b6 (218 aa).

The chain crosses the membrane as a helical span at residues 35–55 (IFYCLGGITLVCFLIQFATGF). A heme c-binding site is contributed by Cys38. His89 and His103 together coordinate heme b. The next 3 helical transmembrane spans lie at 93-113 (ASMM…TGGF), 119-139 (LTWV…VTGY), and 189-209 (LHTF…FLMI). Positions 190 and 205 each coordinate heme b.

It belongs to the cytochrome b family. PetB subfamily. In terms of assembly, the 4 large subunits of the cytochrome b6-f complex are cytochrome b6, subunit IV (17 kDa polypeptide, PetD), cytochrome f and the Rieske protein, while the 4 small subunits are PetG, PetL, PetM and PetN. The complex functions as a dimer. Requires heme b as cofactor. Heme c is required as a cofactor.

It localises to the cellular thylakoid membrane. Its function is as follows. Component of the cytochrome b6-f complex, which mediates electron transfer between photosystem II (PSII) and photosystem I (PSI), cyclic electron flow around PSI, and state transitions. In Prochlorococcus marinus (strain MIT 9301), this protein is Cytochrome b6.